We begin with the raw amino-acid sequence, 456 residues long: Probable transcription factor At3g04930 (456 aa).

Positions methionine 1–proline 71 are disordered. Acidic residues-rich tracts occupy residues glutamate 15 to aspartate 38 and alanine 50 to leucine 62. A Phosphoserine modification is found at serine 16.

Belongs to the GeBP family.

The protein is Probable transcription factor At3g04930 of Arabidopsis thaliana (Mouse-ear cress).